A 303-amino-acid chain; its full sequence is MENVIQELRDREVGKVLEQEPLANHTTMKIGGPADILIIPNRVEAVKDIMDIVKKHDLPWTVIGRGSNLLVLDEGIRGVVIKLGAGLDHLEIDGDQVTVGGGYSVVRLATSMSKKGMSGLEFAAGIPGSIGGAVYMNAGAHGSDMSEILVKARILFEDGTIEWLTNEEMDFSYRTSVLQKKRPGVCLEAVLQLEQKEREAITAQMQQNKDYRKNTQPYSSPCAGSIFRNPLPDHAGNLVEKAGLKGHQIGGAKVSEMHGNFIVNAGGATAKDVLDLIEYVKKTIREQYDVDMHTEVEIIGGNR.

Residues 29-196 enclose the FAD-binding PCMH-type domain; sequence KIGGPADILI…LEAVLQLEQK (168 aa). Arg-174 is a catalytic residue. Ser-225 functions as the Proton donor in the catalytic mechanism. Residue Glu-295 is part of the active site.

It belongs to the MurB family. FAD is required as a cofactor.

It localises to the cytoplasm. The enzyme catalyses UDP-N-acetyl-alpha-D-muramate + NADP(+) = UDP-N-acetyl-3-O-(1-carboxyvinyl)-alpha-D-glucosamine + NADPH + H(+). Its pathway is cell wall biogenesis; peptidoglycan biosynthesis. Functionally, cell wall formation. The polypeptide is UDP-N-acetylenolpyruvoylglucosamine reductase (Bacillus velezensis (strain DSM 23117 / BGSC 10A6 / LMG 26770 / FZB42) (Bacillus amyloliquefaciens subsp. plantarum)).